The following is a 397-amino-acid chain: Digeranylgeranylglycerophospholipid reductase (397 aa).

11 residues coordinate FAD: Ala-15, Glu-34, Cys-45, Gly-46, Gly-48, Arg-101, Ala-125, Glu-163, Asp-284, Gly-296, and Ile-297. A 2,3-bis-O-(geranylgeranyl)-sn-glycerol 1-phospholipid contacts are provided by Lys-339 and Val-375.

This sequence belongs to the geranylgeranyl reductase family. DGGGPL reductase subfamily. The cofactor is FAD.

The catalysed reaction is 2,3-bis-O-(phytanyl)-sn-glycerol 1-phosphate + 8 NADP(+) = 2,3-bis-O-(geranylgeranyl)-sn-glycerol 1-phosphate + 8 NADPH + 8 H(+). It carries out the reaction 2,3-bis-O-(phytanyl)-sn-glycerol 1-phosphate + 8 NAD(+) = 2,3-bis-O-(geranylgeranyl)-sn-glycerol 1-phosphate + 8 NADH + 8 H(+). The enzyme catalyses a 2,3-bis-O-phytanyl-sn-glycerol 1-phospholipid + 8 A = a 2,3-bis-O-(geranylgeranyl)-sn-glycerol 1-phospholipid + 8 AH2. It catalyses the reaction CDP-2,3-bis-O-(geranylgeranyl)-sn-glycerol + 8 AH2 = CDP-2,3-bis-O-(phytanyl)-sn-glycerol + 8 A. The catalysed reaction is archaetidylserine + 8 AH2 = 2,3-bis-O-phytanyl-sn-glycero-3-phospho-L-serine + 8 A. Its pathway is membrane lipid metabolism; glycerophospholipid metabolism. Is involved in the reduction of 2,3-digeranylgeranylglycerophospholipids (unsaturated archaeols) into 2,3-diphytanylglycerophospholipids (saturated archaeols) in the biosynthesis of archaeal membrane lipids. Catalyzes the formation of archaetidic acid (2,3-di-O-phytanyl-sn-glyceryl phosphate) from 2,3-di-O-geranylgeranylglyceryl phosphate (DGGGP) via the hydrogenation of each double bond of the isoprenoid chains. Is also probably able to reduce double bonds of geranyl groups in CDP-2,3-bis-O-(geranylgeranyl)-sn-glycerol and archaetidylserine, thus acting at various stages in the biosynthesis of archaeal membrane lipids. The sequence is that of Digeranylgeranylglycerophospholipid reductase from Picrophilus torridus (strain ATCC 700027 / DSM 9790 / JCM 10055 / NBRC 100828 / KAW 2/3).